Reading from the N-terminus, the 268-residue chain is Shikimate dehydrogenase (NADP(+)) (268 aa).

Residues 13 to 15 and Thr-60 contribute to the shikimate site; that span reads SLS. Lys-64 functions as the Proton acceptor in the catalytic mechanism. Glu-76 lines the NADP(+) pocket. 2 residues coordinate shikimate: Asn-85 and Asp-100. Residues 124–128, 148–153, and Ile-209 each bind NADP(+); these read GAGGA and NRTMAR. Tyr-211 is a shikimate binding site. An NADP(+)-binding site is contributed by Gly-232.

Belongs to the shikimate dehydrogenase family. As to quaternary structure, homodimer.

It catalyses the reaction shikimate + NADP(+) = 3-dehydroshikimate + NADPH + H(+). It participates in metabolic intermediate biosynthesis; chorismate biosynthesis; chorismate from D-erythrose 4-phosphate and phosphoenolpyruvate: step 4/7. Functionally, involved in the biosynthesis of the chorismate, which leads to the biosynthesis of aromatic amino acids. Catalyzes the reversible NADPH linked reduction of 3-dehydroshikimate (DHSA) to yield shikimate (SA). The sequence is that of Shikimate dehydrogenase (NADP(+)) from Staphylococcus aureus (strain USA300).